A 549-amino-acid polypeptide reads, in one-letter code: Endoplasmic reticulum mannosyl-oligosaccharide 1,2-alpha-mannosidase (549 aa).

The Cytoplasmic portion of the chain corresponds to 1–4 (MKNS). The helical; Signal-anchor for type II membrane protein transmembrane segment at 5–24 (VGISIATIVAIIAAIYYVPW) threads the bilayer. Topologically, residues 25–354 (YEHFERKSPG…LLASGSTEGL (330 aa)) are lumenal. 3 N-linked (GlcNAc...) asparagine glycosylation sites follow: Asn-96, Asn-155, and Asn-224. Residues Cys-340 and Cys-385 are joined by a disulfide bond. Glu-399 functions as the Proton donor in the catalytic mechanism. Cys-468 and Cys-471 form a disulfide bridge. Thr-525 is a Ca(2+) binding site.

Belongs to the glycosyl hydrolase 47 family. Homodimer. Requires Ca(2+) as cofactor.

It localises to the endoplasmic reticulum membrane. The catalysed reaction is N(4)-(alpha-D-Man-(1-&gt;2)-alpha-D-Man-(1-&gt;2)-alpha-D-Man-(1-&gt;3)-[alpha-D-Man-(1-&gt;2)-alpha-D-Man-(1-&gt;3)-[alpha-D-Man-(1-&gt;2)-alpha-D-Man-(1-&gt;6)]-alpha-D-Man-(1-&gt;6)]-beta-D-Man-(1-&gt;4)-beta-D-GlcNAc-(1-&gt;4)-beta-D-GlcNAc)-L-asparaginyl-[protein] (N-glucan mannose isomer 9A1,2,3B1,2,3) + 4 H2O = N(4)-(alpha-D-Man-(1-&gt;3)-[alpha-D-Man-(1-&gt;3)-[alpha-D-Man-(1-&gt;6)]-alpha-D-Man-(1-&gt;6)]-beta-D-Man-(1-&gt;4)-beta-D-GlcNAc-(1-&gt;4)-beta-D-GlcNAc)-L-asparaginyl-[protein] (N-glucan mannose isomer 5A1,2) + 4 beta-D-mannose. It carries out the reaction N(4)-(alpha-D-Man-(1-&gt;2)-alpha-D-Man-(1-&gt;2)-alpha-D-Man-(1-&gt;3)-[alpha-D-Man-(1-&gt;3)-[alpha-D-Man-(1-&gt;2)-alpha-D-Man-(1-&gt;6)]-alpha-D-Man-(1-&gt;6)]-beta-D-Man-(1-&gt;4)-beta-D-GlcNAc-(1-&gt;4)-beta-D-GlcNAc)-L-asparaginyl-[protein] (N-glucan mannose isomer 8A1,2,3B1,3) + 3 H2O = N(4)-(alpha-D-Man-(1-&gt;3)-[alpha-D-Man-(1-&gt;3)-[alpha-D-Man-(1-&gt;6)]-alpha-D-Man-(1-&gt;6)]-beta-D-Man-(1-&gt;4)-beta-D-GlcNAc-(1-&gt;4)-beta-D-GlcNAc)-L-asparaginyl-[protein] (N-glucan mannose isomer 5A1,2) + 3 beta-D-mannose. Its pathway is protein modification; protein glycosylation. Its function is as follows. Involved in glycoprotein quality control as it is important for the targeting of misfolded glycoproteins for degradation. It primarily trims a single alpha-1,2-linked mannose residue from Man(9)GlcNAc(2) to produce Man(8)GlcNAc(2), but at high enzyme concentrations it further trims the carbohydrates to Man(5)GlcNAc(2). The protein is Endoplasmic reticulum mannosyl-oligosaccharide 1,2-alpha-mannosidase (MNS1) of Saccharomyces cerevisiae (strain ATCC 204508 / S288c) (Baker's yeast).